Reading from the N-terminus, the 426-residue chain is Glutamate-1-semialdehyde 2,1-aminomutase (426 aa).

Lys265 carries the N6-(pyridoxal phosphate)lysine modification.

This sequence belongs to the class-III pyridoxal-phosphate-dependent aminotransferase family. HemL subfamily. In terms of assembly, homodimer. The cofactor is pyridoxal 5'-phosphate.

It is found in the cytoplasm. It catalyses the reaction (S)-4-amino-5-oxopentanoate = 5-aminolevulinate. Its pathway is porphyrin-containing compound metabolism; protoporphyrin-IX biosynthesis; 5-aminolevulinate from L-glutamyl-tRNA(Glu): step 2/2. This is Glutamate-1-semialdehyde 2,1-aminomutase from Salmonella enteritidis PT4 (strain P125109).